We begin with the raw amino-acid sequence, 295 residues long: Zinc finger C2H2 protein ECU08_0560 (295 aa).

2 C2H2-type zinc fingers span residues 219–243 (FVCT…NLMH) and 249–273 (HKCR…YKVH).

In Encephalitozoon cuniculi (strain GB-M1) (Microsporidian parasite), this protein is Zinc finger C2H2 protein ECU08_0560.